The sequence spans 218 residues: Large ribosomal subunit protein uL3 (218 aa).

The interval 137 to 157 (GVGASHGAHKNHRKPGSIGGA) is disordered.

This sequence belongs to the universal ribosomal protein uL3 family. In terms of assembly, part of the 50S ribosomal subunit. Forms a cluster with proteins L14 and L19.

One of the primary rRNA binding proteins, it binds directly near the 3'-end of the 23S rRNA, where it nucleates assembly of the 50S subunit. This Kocuria rhizophila (strain ATCC 9341 / DSM 348 / NBRC 103217 / DC2201) protein is Large ribosomal subunit protein uL3.